Here is a 604-residue protein sequence, read N- to C-terminus: Kelch-like protein 15 (604 aa).

A BTB domain is found at 31 to 98 (LDVTLVIEDH…MYYGTIELSM (68 aa)). Residues 133-237 (CAEIMRLLDD…TPSSVFEKVK (105 aa)) form the BACK domain. 5 Kelch repeats span residues 328–379 (FVFL…VIGK), 381–426 (IYAV…VLNN), 428–473 (LFIT…NKSK), 489–542 (KLYV…VLDK), and 544–590 (IMVL…VCNL).

Homodimer. Dimerization does not affect PPP2R5B-binding, but is required for its proteasomal degradation. Interacts with CUL3. Directly interacts with PPP2R5B; this interaction leads to PPP2R5B proteasomal degradation. Interacts with RBBP8/CtIP; this interaction leads to RBBP8 proteasomal degradation. Interacts with PACMP micropeptide; interaction prevents ubiquitination and degradation of RBBP8/CtIP.

Its subcellular location is the nucleus. The protein operates within protein modification; protein ubiquitination. Substrate-specific adapter for CUL3 E3 ubiquitin-protein ligase complex. Acts as an adapter for CUL3 to target the serine/threonine-protein phosphatase 2A (PP2A) subunit PPP2R5B for ubiquitination and subsequent proteasomal degradation, thus promoting exchange with other regulatory subunits and regulating PP2A holoenzyme composition. Acts as an adapter for CUL3 to target the DNA-end resection factor RBBP8/CtIP for ubiquitination and subsequent proteasomal degradation. Through the regulation of RBBP8/CtIP protein turnover, plays a key role in DNA damage response, favoring DNA double-strand repair through error-prone non-homologous end joining (NHEJ) over error-free, RBBP8-mediated homologous recombination (HR). In Mus musculus (Mouse), this protein is Kelch-like protein 15 (Klhl15).